The sequence spans 223 residues: ATP phosphoribosyltransferase (223 aa).

It belongs to the ATP phosphoribosyltransferase family. Short subfamily. As to quaternary structure, heteromultimer composed of HisG and HisZ subunits.

It is found in the cytoplasm. The catalysed reaction is 1-(5-phospho-beta-D-ribosyl)-ATP + diphosphate = 5-phospho-alpha-D-ribose 1-diphosphate + ATP. Its pathway is amino-acid biosynthesis; L-histidine biosynthesis; L-histidine from 5-phospho-alpha-D-ribose 1-diphosphate: step 1/9. Its function is as follows. Catalyzes the condensation of ATP and 5-phosphoribose 1-diphosphate to form N'-(5'-phosphoribosyl)-ATP (PR-ATP). Has a crucial role in the pathway because the rate of histidine biosynthesis seems to be controlled primarily by regulation of HisG enzymatic activity. In Halothermothrix orenii (strain H 168 / OCM 544 / DSM 9562), this protein is ATP phosphoribosyltransferase.